Here is a 529-residue protein sequence, read N- to C-terminus: MASFHKGAAGDSMGSSKMSFDQRRQLVLKLSKESEREFKEVLKDWSCNEIRELLRAESKKDIKYTGLTKDEIITRLFNIVSKKNTRDHEVEEIIPSPKRQKRDLVTPLAKAKGKGKMYCQNLACQNKLREEATFCKRCSCCICFKYDDNKDPSLWLTCNSDSQFDGESCGLSCHLNCAFDSEKSGLKEDTPSSDIDGCFNCVSCGKTNSKIECLKKQLIIANEERRVGVFCYRILLAHKLLKGTKKYIIVSEEVEKAVMHLKNEFGVPISCLPSKMSRGLVNRLCCAEKVKKHCSSALKELDGLPLPSTIQGSMKIRIESVLATSVTFDIEAEESFSWGDTNHYRMVYRKVSEKHSSKDLTRELFSTSSHQRFTVMELTPATEYWFKIVSFSGVEELSVDEFIVSTKTLQDEEVAAVLLNMSNCNNANKMEKSGSCSFGFEECVNLIRQLECSGQVKSDFRKKFLTWYCLKATDKEKHVVEIFVDTFKDDKEALAKQLIDTFSDCITRKHPEIGGGSESAGVSLILLQD.

The short motif at 97 to 104 (PKRQKRDL) is the Nuclear localization signal element. The PHD-type zinc-finger motif lies at 137–207 (RCSCCICFKY…CFNCVSCGKT (71 aa)). Positions 214–221 (LKKQLIIA) match the Nuclear localization signal motif. The 100-residue stretch at 312-411 (GSMKIRIESV…FIVSTKTLQD (100 aa)) folds into the Fibronectin type-III domain. The VIN3-Interacting Domain (VID) stretch occupies residues 421 to 529 (MSNCNNANKM…AGVSLILLQD (109 aa)).

As to quaternary structure, interacts with VIN3.

It is found in the nucleus. Involved in both the vernalization and photoperiod pathways by regulating gene expression. This Arabidopsis thaliana (Mouse-ear cress) protein is VIN3-like protein 3 (VIL3).